The primary structure comprises 88 residues: Adenylosuccinate lyase (88 aa).

Residues 4–5 (RY) and 67–69 (KHD) each bind N(6)-(1,2-dicarboxyethyl)-AMP.

This sequence belongs to the lyase 1 family. Adenylosuccinate lyase subfamily. In terms of assembly, homotetramer and homodimer. Residues from neighboring subunits contribute catalytic and substrate-binding residues to each active site.

It carries out the reaction N(6)-(1,2-dicarboxyethyl)-AMP = fumarate + AMP. The enzyme catalyses (2S)-2-[5-amino-1-(5-phospho-beta-D-ribosyl)imidazole-4-carboxamido]succinate = 5-amino-1-(5-phospho-beta-D-ribosyl)imidazole-4-carboxamide + fumarate. The protein operates within purine metabolism; AMP biosynthesis via de novo pathway; AMP from IMP: step 2/2. It participates in purine metabolism; IMP biosynthesis via de novo pathway; 5-amino-1-(5-phospho-D-ribosyl)imidazole-4-carboxamide from 5-amino-1-(5-phospho-D-ribosyl)imidazole-4-carboxylate: step 2/2. Functionally, catalyzes two reactions in de novo purine nucleotide biosynthesis. Catalyzes the breakdown of 5-aminoimidazole- (N-succinylocarboxamide) ribotide (SAICAR or 2-[5-amino-1-(5-phospho-beta-D-ribosyl)imidazole-4-carboxamido]succinate) to 5-aminoimidazole-4-carboxamide ribotide (AICAR or 5-amino-1-(5-phospho-beta-D-ribosyl)imidazole-4-carboxamide) and fumarate, and of adenylosuccinate (ADS or N(6)-(1,2-dicarboxyethyl)-AMP) to adenosine monophosphate (AMP) and fumarate. This Spiroplasma citri protein is Adenylosuccinate lyase (purB).